We begin with the raw amino-acid sequence, 173 residues long: Crossover junction endodeoxyribonuclease RuvC (173 aa).

Active-site residues include D8, E67, and D139. Mg(2+) is bound by residues D8, E67, and D139.

This sequence belongs to the RuvC family. As to quaternary structure, homodimer which binds Holliday junction (HJ) DNA. The HJ becomes 2-fold symmetrical on binding to RuvC with unstacked arms; it has a different conformation from HJ DNA in complex with RuvA. In the full resolvosome a probable DNA-RuvA(4)-RuvB(12)-RuvC(2) complex forms which resolves the HJ. Requires Mg(2+) as cofactor.

The protein resides in the cytoplasm. It catalyses the reaction Endonucleolytic cleavage at a junction such as a reciprocal single-stranded crossover between two homologous DNA duplexes (Holliday junction).. In terms of biological role, the RuvA-RuvB-RuvC complex processes Holliday junction (HJ) DNA during genetic recombination and DNA repair. Endonuclease that resolves HJ intermediates. Cleaves cruciform DNA by making single-stranded nicks across the HJ at symmetrical positions within the homologous arms, yielding a 5'-phosphate and a 3'-hydroxyl group; requires a central core of homology in the junction. The consensus cleavage sequence is 5'-(A/T)TT(C/G)-3'. Cleavage occurs on the 3'-side of the TT dinucleotide at the point of strand exchange. HJ branch migration catalyzed by RuvA-RuvB allows RuvC to scan DNA until it finds its consensus sequence, where it cleaves and resolves the cruciform DNA. In Shigella flexneri serotype 5b (strain 8401), this protein is Crossover junction endodeoxyribonuclease RuvC.